Here is a 710-residue protein sequence, read N- to C-terminus: Chloride channel protein CLC-e (710 aa).

Helical transmembrane passes span 74-94 (ELAIASACLVGVLTGVSVVLF), 122-142 (IGSNWLRVILVPTIGGLVVSI), 164-184 (VKAVLRPFLKTVAACVTLGTG), 193-213 (SVEIGASIAKGVNSLFNKSPQ), 222-242 (GSAAGISSGFNAAVAGCFFAV), 261-281 (TTSMVILSAVTASVVSEIGLG), 296-316 (PGELPLYLLLGALCGLVSLAL), 340-360 (VFPVMGGLSVGIIALVYPEVL), 379-399 (GLSADLLLQLVAVKIAATAWC), 412-432 (SLFIGGAAGMAYGKFIGLALA), 451-471 (GLVGMAATLAGVCQVPLTAVL), and 472-492 (LLFELTQDYRIVLPLLGAVGM). The segment at 500–534 (QSKRQETRETKETRKRKSQEAVQSLTSSDDESSTN) is disordered. Positions 502–511 (KRQETRETKE) are enriched in basic and acidic residues. Polar residues predominate over residues 520 to 534 (AVQSLTSSDDESSTN). CBS domains follow at residues 565–624 (MRTR…GNNR) and 640–702 (KCKV…ATRM). Residues 667 to 687 (HVAVVSGSIDAPRIHPVGVLD) form a helical membrane-spanning segment.

The protein belongs to the chloride channel (TC 2.A.49) family. As to quaternary structure, homodimer.

It localises to the membrane. It carries out the reaction 2 chloride(in) + H(+)(out) = 2 chloride(out) + H(+)(in). Functionally, voltage-gated thylakoid chloride (Cl) channel/transporter involved in chloride homeostasis after transition from light to dark. Influences chloroplast ultrastructure and subsequent photosynthetic electron transport. During photosynthetic response on transition from dark to low light, involved in a sequential mechanism of adaptation; VCCN1 and CLCe first trigger the activation of photoprotection, which is later down-regulated by KEA3 to a low steady state, while adjusting electron transport. Regulates photosynthesis by a pH-independent mechanism likely involving Cl(-) homeostasis. This Arabidopsis thaliana (Mouse-ear cress) protein is Chloride channel protein CLC-e.